Consider the following 270-residue polypeptide: Acetylglutamate kinase (270 aa).

Residues 41–42 (GG), Arg-63, and Asn-166 contribute to the substrate site.

This sequence belongs to the acetylglutamate kinase family. ArgB subfamily.

The protein resides in the cytoplasm. It carries out the reaction N-acetyl-L-glutamate + ATP = N-acetyl-L-glutamyl 5-phosphate + ADP. It functions in the pathway amino-acid biosynthesis; L-arginine biosynthesis; N(2)-acetyl-L-ornithine from L-glutamate: step 2/4. Catalyzes the ATP-dependent phosphorylation of N-acetyl-L-glutamate. This chain is Acetylglutamate kinase, found in Anaeromyxobacter dehalogenans (strain 2CP-C).